A 104-amino-acid polypeptide reads, in one-letter code: Flagellar hook-basal body complex protein FliE (104 aa).

The protein belongs to the FliE family.

The protein localises to the bacterial flagellum basal body. In Salmonella newport (strain SL254), this protein is Flagellar hook-basal body complex protein FliE.